The following is a 121-amino-acid chain: Large ribosomal subunit protein uL18 (121 aa).

It belongs to the universal ribosomal protein uL18 family. Part of the 50S ribosomal subunit; part of the 5S rRNA/L5/L18/L25 subcomplex. Contacts the 5S and 23S rRNAs.

Functionally, this is one of the proteins that bind and probably mediate the attachment of the 5S RNA into the large ribosomal subunit, where it forms part of the central protuberance. This Ureaplasma parvum serovar 3 (strain ATCC 27815 / 27 / NCTC 11736) protein is Large ribosomal subunit protein uL18.